A 250-amino-acid chain; its full sequence is Sugar fermentation stimulation protein homolog (250 aa).

The protein belongs to the SfsA family.

This Trichodesmium erythraeum (strain IMS101) protein is Sugar fermentation stimulation protein homolog.